A 349-amino-acid chain; its full sequence is Isopentenyl-diphosphate delta-isomerase (349 aa).

Residue 5-6 (RK) coordinates substrate. FMN contacts are provided by residues Ser61, 62-64 (SMT), Ser92, and Asn120. 92-94 (SMR) provides a ligand contact to substrate. Gln159 is a binding site for substrate. Glu160 contacts Mg(2+). FMN is bound by residues Lys189, Thr219, 269–271 (GLR), and 290–291 (AR).

This sequence belongs to the IPP isomerase type 2 family. As to quaternary structure, homooctamer. Dimer of tetramers. FMN is required as a cofactor. NADPH serves as cofactor. It depends on Mg(2+) as a cofactor.

Its subcellular location is the cytoplasm. It carries out the reaction isopentenyl diphosphate = dimethylallyl diphosphate. Its function is as follows. Involved in the biosynthesis of isoprenoids. Catalyzes the 1,3-allylic rearrangement of the homoallylic substrate isopentenyl (IPP) to its allylic isomer, dimethylallyl diphosphate (DMAPP). This Picrophilus torridus (strain ATCC 700027 / DSM 9790 / JCM 10055 / NBRC 100828 / KAW 2/3) protein is Isopentenyl-diphosphate delta-isomerase.